A 376-amino-acid polypeptide reads, in one-letter code: Lipid-A-disaccharide synthase (376 aa).

The protein belongs to the LpxB family.

It catalyses the reaction a lipid X + a UDP-2-N,3-O-bis[(3R)-3-hydroxyacyl]-alpha-D-glucosamine = a lipid A disaccharide + UDP + H(+). It functions in the pathway bacterial outer membrane biogenesis; LPS lipid A biosynthesis. Functionally, condensation of UDP-2,3-diacylglucosamine and 2,3-diacylglucosamine-1-phosphate to form lipid A disaccharide, a precursor of lipid A, a phosphorylated glycolipid that anchors the lipopolysaccharide to the outer membrane of the cell. The sequence is that of Lipid-A-disaccharide synthase from Coxiella burnetii (strain CbuK_Q154) (Coxiella burnetii (strain Q154)).